The following is a 592-amino-acid chain: Hepatocyte nuclear factor 1-alpha-B (592 aa).

The interval 1-31 (MASQLSYLQQELLRALLESGVTKEALKKALA) is dimerization. In terms of domain architecture, HNF-p1 spans 1–32 (MASQLSYLQQELLRALLESGVTKEALKKALAD). A disordered region spans residues 54–78 (NCVQLPNGLGEPQMSEDESSDDGGD). Residues 67–77 (MSEDESSDDGG) are compositionally biased toward acidic residues. Residues 85 to 180 (KELERLSPEE…IARQFTHAGH (96 aa)) form the POU-specific atypical domain. Interaction with DNA regions lie at residues 128–130 (QRE), 141–147 (HLSQHLN), 153–156 (KTQK), 201–204 (RFKW), 261–263 (RVY), and 268–271 (NSGK). The short motif at 195-203 (KKMRRNRFK) is the Nuclear localization signal element. The homeobox; HNF1-type DNA-binding region spans 197 to 277 (MRRNRFKWGP…NSGKEEAFRH (81 aa)). 2 stretches are compositionally biased toward polar residues: residues 284 to 295 (YNGQQSSAQPLS) and 306 to 328 (RYTQDSSTDRSAAMANSQSTLSP). Disordered regions lie at residues 284 to 329 (YNGQ…LSPS) and 511 to 533 (KQVVSHHPTAHGDSPGSQLHNQD).

Belongs to the HNF1 homeobox family. Binds DNA as dimer. Forms a homodimer or heterodimer with HNF1-alpha-A. Potentially also form a heterodimer with HNF1-beta. As to expression, liver.

Its subcellular location is the nucleus. Functionally, transcriptional activator that regulates the tissue specific expression of multiple genes, especially in pancreas and liver. Binds to the hepatocyte specific promoter element HP1. Binds to the inverted palindrome 5'-GTTAATNATTAAC-3'. The sequence is that of Hepatocyte nuclear factor 1-alpha-B (hnf1a-b) from Xenopus laevis (African clawed frog).